Consider the following 496-residue polypeptide: MSSQLNDPTPIPAQSSLSFTQGFLLGQLSVVLLIAAFIKFFIFGEAPPPPSRGLSHRSATHRRSNSIYSSTQHDGNTRTLREKPSNSNVLRPVPSSATNTRSILRKTYYTAIPTNPSSKHGRHRIHHSSHQPESLDWFNVLIAQTIAQYRQTAYLLKDSPTSSILSSLTAALNNPEKKPSFIDKITVTDISLGEEFPIFSNCRIIAVDDPNSDGGRLQALMDVDLSDDNLSIAIETQLLLNYPKPCSAILPVALSISVVRFSGTLCISLVPASTPPLDTPSHSPSPPTAQTTTTGRSKREDQTGGSHSRAGGSSEEPSGENPPKTSPKSNVAFSFLPDYRLDLSVRSLIGSRSRLQDVPKVAQLVEARVHAWFEERVVEPRVQVVGLPDLWPRMGRTGVRTGDDSETGSNAPRSSTAADASGPAHHEDSSREPEVLRFGSLLGTRPPFDLASRTSSFNVETGDLRSRSMTREESSGNLSDQFHMPGSLPGGGVTTT.

The Lumenal portion of the chain corresponds to 1-22 (MSSQLNDPTPIPAQSSLSFTQG). The chain crosses the membrane as a helical span at residues 23–43 (FLLGQLSVVLLIAAFIKFFIF). The Cytoplasmic segment spans residues 44-496 (GEAPPPPSRG…SLPGGGVTTT (453 aa)). Disordered regions lie at residues 50–96 (PSRG…VPSS), 276–331 (PLDT…KSNV), 395–433 (GRTG…SREP), and 449–496 (DLAS…VTTT). Residues 54-64 (LSHRSATHRRS) are compositionally biased toward basic residues. The segment covering 65-74 (NSIYSSTQHD) has biased composition (polar residues). The span at 75-84 (GNTRTLREKP) shows a compositional bias: basic and acidic residues. Residues 85–96 (SNSNVLRPVPSS) show a composition bias toward polar residues. Residues 131-388 (QPESLDWFNV…EPRVQVVGLP (258 aa)) form the SMP-LTD domain. Positions 276 to 287 (PLDTPSHSPSPP) are enriched in pro residues. The span at 407–418 (TGSNAPRSSTAA) shows a compositional bias: polar residues. Basic and acidic residues-rich tracts occupy residues 424 to 433 (AHHEDSSREP) and 462 to 474 (GDLR…REES).

This sequence belongs to the MMM1 family. In terms of assembly, homodimer. Component of the ER-mitochondria encounter structure (ERMES) or MDM complex, composed of mmm1, mdm10, mdm12 and mdm34. A mmm1 homodimer associates with one molecule of mdm12 on each side in a pairwise head-to-tail manner, and the SMP-LTD domains of mmm1 and mdm12 generate a continuous hydrophobic tunnel for phospholipid trafficking.

The protein localises to the endoplasmic reticulum membrane. Functionally, component of the ERMES/MDM complex, which serves as a molecular tether to connect the endoplasmic reticulum (ER) and mitochondria. Components of this complex are involved in the control of mitochondrial shape and protein biogenesis, and function in nonvesicular lipid trafficking between the ER and mitochondria. The mdm12-mmm1 subcomplex functions in the major beta-barrel assembly pathway that is responsible for biogenesis of all outer membrane beta-barrel proteins, and acts in a late step after the SAM complex. The mdm10-mdm12-mmm1 subcomplex further acts in the TOM40-specific pathway after the action of the mdm12-mmm1 complex. Essential for establishing and maintaining the structure of mitochondria and maintenance of mtDNA nucleoids. The polypeptide is Maintenance of mitochondrial morphology protein 1 (Neosartorya fischeri (strain ATCC 1020 / DSM 3700 / CBS 544.65 / FGSC A1164 / JCM 1740 / NRRL 181 / WB 181) (Aspergillus fischerianus)).